Here is an 82-residue protein sequence, read N- to C-terminus: UPF0248 protein Mevan_1298 (82 aa).

The protein belongs to the UPF0248 family.

In Methanococcus vannielii (strain ATCC 35089 / DSM 1224 / JCM 13029 / OCM 148 / SB), this protein is UPF0248 protein Mevan_1298.